The following is a 551-amino-acid chain: Formate--tetrahydrofolate ligase (551 aa).

65–72 (TPAGEGKT) contributes to the ATP binding site.

Belongs to the formate--tetrahydrofolate ligase family.

It carries out the reaction (6S)-5,6,7,8-tetrahydrofolate + formate + ATP = (6R)-10-formyltetrahydrofolate + ADP + phosphate. Its pathway is one-carbon metabolism; tetrahydrofolate interconversion. This chain is Formate--tetrahydrofolate ligase, found in Thermosipho africanus (strain TCF52B).